The chain runs to 364 residues: Alanine racemase (364 aa).

Catalysis depends on Lys34, which acts as the Proton acceptor; specific for D-alanine. Lys34 is modified (N6-(pyridoxal phosphate)lysine). A substrate-binding site is contributed by Arg129. Residue Tyr259 is the Proton acceptor; specific for L-alanine of the active site. Met307 is a substrate binding site.

Belongs to the alanine racemase family. It depends on pyridoxal 5'-phosphate as a cofactor.

The catalysed reaction is L-alanine = D-alanine. The protein operates within amino-acid biosynthesis; D-alanine biosynthesis; D-alanine from L-alanine: step 1/1. In terms of biological role, catalyzes the interconversion of L-alanine and D-alanine. May also act on other amino acids. The protein is Alanine racemase (alr) of Coxiella burnetii (strain Dugway 5J108-111).